Here is a 142-residue protein sequence, read N- to C-terminus: Neuritin (142 aa).

Positions 1 to 27 are cleaved as a signal peptide; that stretch reads MGLKLNGRYISLILAVQIAYLVQAVRA. Residue G116 is the site of GPI-anchor amidated glycine attachment. Positions 117-142 are cleaved as a propeptide — removed in mature form; sequence AAGSLLPALSVLLVSLSAALATWFSF.

The protein belongs to the neuritin family. In terms of assembly, component of the outer core of AMPAR complex. AMPAR complex consists of an inner core made of 4 pore-forming GluA/GRIA proteins (GRIA1, GRIA2, GRIA3 and GRIA4) and 4 major auxiliary subunits arranged in a twofold symmetry. One of the two pairs of distinct binding sites is occupied either by CNIH2, CNIH3 or CACNG2, CACNG3. The other harbors CACNG2, CACNG3, CACNG4, CACNG8 or GSG1L. This inner core of AMPAR complex is complemented by outer core constituents binding directly to the GluA/GRIA proteins at sites distinct from the interaction sites of the inner core constituents. Outer core constituents include at least PRRT1, PRRT2, CKAMP44/SHISA9, FRRS1L and NRN1. The proteins of the inner and outer core serve as a platform for other, more peripherally associated AMPAR constituents. Alone or in combination, these auxiliary subunits control the gating and pharmacology of the AMPAR complex and profoundly impact their biogenesis and protein processing. Expressed in the brain (at protein level).

It localises to the cell membrane. The protein localises to the synapse. Promotes neurite outgrowth and especially branching of neuritic processes in primary hippocampal and cortical cells. The protein is Neuritin (Nrn1) of Mus musculus (Mouse).